Reading from the N-terminus, the 459-residue chain is Glycosyl hydrolase family 109 protein (459 aa).

The tat-type signal signal peptide spans 1–31 (MHNIHRRNFLKAAGAATAGLVTANIALNAYA). Residues 64-65 (ER), Asp86, 135-138 (WEWH), 155-156 (EV), and Asn184 contribute to the NAD(+) site. Residues Tyr213, Arg232, 244 to 247 (YPTH), and Tyr326 each bind substrate. Residue Tyr244 participates in NAD(+) binding.

Belongs to the Gfo/Idh/MocA family. Glycosyl hydrolase 109 subfamily. NAD(+) is required as a cofactor. Predicted to be exported by the Tat system. The position of the signal peptide cleavage has not been experimentally proven.

Its function is as follows. Glycosidase. This is Glycosyl hydrolase family 109 protein from Shewanella baltica (strain OS195).